Here is a 101-residue protein sequence, read N- to C-terminus: MRKFETLLLLSPELAADAREALLTTLSGVVEREQGSMITADHWGMRDLAYPVRKQMRGYYVRLEYTAPGATVAELERIIRISDGIFKFVTVKLADAVEEVA.

It belongs to the bacterial ribosomal protein bS6 family.

Binds together with bS18 to 16S ribosomal RNA. This Nitratidesulfovibrio vulgaris (strain ATCC 29579 / DSM 644 / CCUG 34227 / NCIMB 8303 / VKM B-1760 / Hildenborough) (Desulfovibrio vulgaris) protein is Small ribosomal subunit protein bS6.